The sequence spans 252 residues: Chitooligosaccharide deacetylase (252 aa).

Positions 61 and 125 each coordinate Mg(2+).

It belongs to the YdjC deacetylase family. ChbG subfamily. As to quaternary structure, homodimer. Mg(2+) serves as cofactor.

The protein localises to the cytoplasm. It catalyses the reaction N,N'-diacetylchitobiose + H2O = N-acetyl-beta-D-glucosaminyl-(1-&gt;4)-D-glucosamine + acetate. The catalysed reaction is diacetylchitobiose-6'-phosphate + H2O = N'-monoacetylchitobiose-6'-phosphate + acetate. Its pathway is glycan degradation; chitin degradation. Functionally, involved in the degradation of chitin. ChbG is essential for growth on the acetylated chitooligosaccharides chitobiose and chitotriose but is dispensable for growth on cellobiose and chitosan dimer, the deacetylated form of chitobiose. Deacetylation of chitobiose-6-P and chitotriose-6-P is necessary for both the activation of the chb promoter by the regulatory protein ChbR and the hydrolysis of phosphorylated beta-glucosides by the phospho-beta-glucosidase ChbF. Catalyzes the removal of only one acetyl group from chitobiose-6-P to yield monoacetylchitobiose-6-P, the inducer of ChbR and the substrate of ChbF. In Escherichia coli O6:H1 (strain CFT073 / ATCC 700928 / UPEC), this protein is Chitooligosaccharide deacetylase.